The primary structure comprises 89 residues: Protein YxiC (89 aa).

The chain is Protein YxiC (yxiC) from Bacillus subtilis (strain 168).